We begin with the raw amino-acid sequence, 303 residues long: ATP synthase gamma chain (303 aa).

This sequence belongs to the ATPase gamma chain family. F-type ATPases have 2 components, CF(1) - the catalytic core - and CF(0) - the membrane proton channel. CF(1) has five subunits: alpha(3), beta(3), gamma(1), delta(1), epsilon(1). CF(0) has three main subunits: a, b and c.

It localises to the cell inner membrane. In terms of biological role, produces ATP from ADP in the presence of a proton gradient across the membrane. The gamma chain is believed to be important in regulating ATPase activity and the flow of protons through the CF(0) complex. The protein is ATP synthase gamma chain of Bartonella henselae (strain ATCC 49882 / DSM 28221 / CCUG 30454 / Houston 1) (Rochalimaea henselae).